The following is an 89-amino-acid chain: Small ribosomal subunit protein uS15 (89 aa).

It belongs to the universal ribosomal protein uS15 family. As to quaternary structure, part of the 30S ribosomal subunit. Forms a bridge to the 50S subunit in the 70S ribosome, contacting the 23S rRNA.

Its function is as follows. One of the primary rRNA binding proteins, it binds directly to 16S rRNA where it helps nucleate assembly of the platform of the 30S subunit by binding and bridging several RNA helices of the 16S rRNA. In terms of biological role, forms an intersubunit bridge (bridge B4) with the 23S rRNA of the 50S subunit in the ribosome. The sequence is that of Small ribosomal subunit protein uS15 from Nitrosomonas eutropha (strain DSM 101675 / C91 / Nm57).